A 106-amino-acid polypeptide reads, in one-letter code: Pyruvate decarboxylase 2 (106 aa).

2 residues coordinate Mg(2+): asparagine 10 and glycine 12.

Belongs to the TPP enzyme family. In terms of assembly, homotetramer. The cofactor is a metal cation. Thiamine diphosphate serves as cofactor.

The enzyme catalyses a 2-oxocarboxylate + H(+) = an aldehyde + CO2. This chain is Pyruvate decarboxylase 2 (PDC2), found in Zea mays (Maize).